The chain runs to 366 residues: uncharacterized protein (366 aa).

Residues 63 to 288 enclose the OBG-type G domain; sequence ARVAMVGFPS…LLEKMWEYLA (226 aa). GTP is bound by residues 69–76, 115–119, and 246–249; these read GFPSVGKS, DLPGI, and NKVD. The TGS domain occupies 288-365; that stretch reads ALVRVYTKKP…DHEDVIQIVK (78 aa).

Belongs to the TRAFAC class OBG-HflX-like GTPase superfamily. OBG GTPase family.

This is an uncharacterized protein from Caenorhabditis elegans.